Reading from the N-terminus, the 272-residue chain is Transcription factor PU.1 (272 aa).

The segment at 126–165 (SPAHQQSSDEEEGERQSPPLEVSDGEADGLEPGPGLLHGE) is disordered. Phosphoserine is present on residues Ser-142 and Ser-148. Positions 155-165 (LEPGPGLLHGE) are enriched in low complexity. A DNA-binding region (ETS) is located at residues 172–255 (IRLYQFLLDL…VKKKLTYQFS (84 aa)). 4 residues coordinate DNA: Lys-219, Arg-232, Arg-235, and Lys-245.

This sequence belongs to the ETS family. Binds DNA as a monomer. Can form homomers. Directly interacts with CEBPD/NF-IL6-beta; this interaction does not affect DNA-binding properties of each partner. Interacts with NONO/p54(nrb). Interacts with RUNX1/AML1. Interacts with GFI1; the interaction represses SPI1 transcriptional activity, hence blocks SPI1-induced macrophage differentiation of myeloid progenitor cells. Interacts with CEBPE. Interacts with IRF4/Pip and IRF8. Interacts with JUN. Interacts with RB1. Interacts with TBP. As to expression, expressed in spleen, thymus and bone-marrow macrophages.

The protein localises to the nucleus. Transcriptional activity at macrophage-specific genes is inhibited by interaction with GFI1, which results in inhibition of SPI1-induced macrophage differentiation of myeloid progenitor cells, but not that of the granulocyte lineage. Pioneer transcription factor, which controls hematopoietic cell fate by decompacting stem cell heterochromatin and allowing other transcription factors to enter otherwise inaccessible genomic sites. Once in open chromatin, can directly control gene expression by binding genetic regulatory elements and can also more broadly influence transcription by recruiting transcription factors, such as interferon regulatory factors (IRFs), to otherwise inaccessible genomic regions. Transcriptionally activates genes important for myeloid and lymphoid lineages, such as CSF1R. Transcriptional activation from certain promoters, possibly containing low affinity binding sites, is achieved cooperatively with other transcription factors. FCER1A transactivation is achieved in cooperation with GATA1. May be particularly important for the pro- to pre-B cell transition. Binds (via the ETS domain) onto the purine-rich DNA core sequence 5'-GAGGAA-3', also known as the PU-box. In vitro can bind RNA and interfere with pre-mRNA splicing. The polypeptide is Transcription factor PU.1 (Spi1) (Mus musculus (Mouse)).